The sequence spans 395 residues: ATP phosphoribosyltransferase regulatory subunit (395 aa).

The protein belongs to the class-II aminoacyl-tRNA synthetase family. HisZ subfamily. In terms of assembly, heteromultimer composed of HisG and HisZ subunits.

It localises to the cytoplasm. The protein operates within amino-acid biosynthesis; L-histidine biosynthesis; L-histidine from 5-phospho-alpha-D-ribose 1-diphosphate: step 1/9. Its function is as follows. Required for the first step of histidine biosynthesis. May allow the feedback regulation of ATP phosphoribosyltransferase activity by histidine. The protein is ATP phosphoribosyltransferase regulatory subunit of Pseudomonas putida (strain ATCC 700007 / DSM 6899 / JCM 31910 / BCRC 17059 / LMG 24140 / F1).